The following is a 549-amino-acid chain: Dihydroxy-acid dehydratase (549 aa).

A Mg(2+)-binding site is contributed by D78. [2Fe-2S] cluster is bound at residue C119. Mg(2+) contacts are provided by D120 and K121. An N6-carboxylysine modification is found at K121. Position 191 (C191) interacts with [2Fe-2S] cluster. E441 contacts Mg(2+). The Proton acceptor role is filled by S466.

This sequence belongs to the IlvD/Edd family. In terms of assembly, homodimer. [2Fe-2S] cluster is required as a cofactor. Requires Mg(2+) as cofactor.

The enzyme catalyses (2R)-2,3-dihydroxy-3-methylbutanoate = 3-methyl-2-oxobutanoate + H2O. The catalysed reaction is (2R,3R)-2,3-dihydroxy-3-methylpentanoate = (S)-3-methyl-2-oxopentanoate + H2O. It functions in the pathway amino-acid biosynthesis; L-isoleucine biosynthesis; L-isoleucine from 2-oxobutanoate: step 3/4. It participates in amino-acid biosynthesis; L-valine biosynthesis; L-valine from pyruvate: step 3/4. Functionally, functions in the biosynthesis of branched-chain amino acids. Catalyzes the dehydration of (2R,3R)-2,3-dihydroxy-3-methylpentanoate (2,3-dihydroxy-3-methylvalerate) into 2-oxo-3-methylpentanoate (2-oxo-3-methylvalerate) and of (2R)-2,3-dihydroxy-3-methylbutanoate (2,3-dihydroxyisovalerate) into 2-oxo-3-methylbutanoate (2-oxoisovalerate), the penultimate precursor to L-isoleucine and L-valine, respectively. This Methanothermobacter thermautotrophicus (strain ATCC 29096 / DSM 1053 / JCM 10044 / NBRC 100330 / Delta H) (Methanobacterium thermoautotrophicum) protein is Dihydroxy-acid dehydratase.